Here is a 121-residue protein sequence, read N- to C-terminus: Large ribosomal subunit protein uL14 (121 aa).

The protein belongs to the universal ribosomal protein uL14 family. In terms of assembly, part of the 50S ribosomal subunit. Forms a cluster with proteins L3 and L19. In the 70S ribosome, L14 and L19 interact and together make contacts with the 16S rRNA in bridges B5 and B8.

Functionally, binds to 23S rRNA. Forms part of two intersubunit bridges in the 70S ribosome. This Synechococcus sp. (strain CC9902) protein is Large ribosomal subunit protein uL14.